Here is a 351-residue protein sequence, read N- to C-terminus: L-threonine 3-dehydrogenase (351 aa).

Cys-39 serves as a coordination point for Zn(2+). Catalysis depends on charge relay system residues Thr-41 and His-44. His-64, Glu-65, Cys-94, Cys-97, Cys-100, and Cys-108 together coordinate Zn(2+). NAD(+) contacts are provided by residues Ile-176, Asp-196, Arg-201, 271–273, and 295–296; these read LGI and IY.

Belongs to the zinc-containing alcohol dehydrogenase family. As to quaternary structure, homotetramer. The cofactor is Zn(2+).

Its subcellular location is the cytoplasm. The enzyme catalyses L-threonine + NAD(+) = (2S)-2-amino-3-oxobutanoate + NADH + H(+). It functions in the pathway amino-acid degradation; L-threonine degradation via oxydo-reductase pathway; glycine from L-threonine: step 1/2. Catalyzes the NAD(+)-dependent oxidation of L-threonine to 2-amino-3-ketobutyrate. The protein is L-threonine 3-dehydrogenase of Francisella tularensis subsp. tularensis (strain SCHU S4 / Schu 4).